A 175-amino-acid chain; its full sequence is Protein FLOWERING LOCUS T (175 aa).

Belongs to the phosphatidylethanolamine-binding protein family. In terms of assembly, interacts with FD/BZIP14 and FDP/BZIP27. Interacts with FTIP1/MCTP1 in phloem companion cells. Interacts with NAKR1. As to expression, mostly localized in leaves vasculature.

The protein localises to the cytoplasm. The protein resides in the nucleus. It is found in the endoplasmic reticulum. In terms of biological role, component of the mobile flower-promoting signal (floral stimulus or florigen). Promotes the transition from vegetative growth to flowering. Required for 'SEPALLATA3' (SEP3) and 'FRUITFULL' (FUL) accumulation in mature rosette leaves. Seems to acts in parallel with 'LEAFY' to induce flowering by regulating 'APETALA1'. Translated in leaves and then transported to the shoot apical meristem where it activates the transcription of several floral meristem identity genes. May play a role in both the autonomous and the long-day flowering pathways. This chain is Protein FLOWERING LOCUS T, found in Arabidopsis thaliana (Mouse-ear cress).